The sequence spans 347 residues: 4-hydroxy-2-oxovalerate aldolase (347 aa).

The Pyruvate carboxyltransferase domain maps to 2 to 252 (ILISDATLRD…DTRTTFERVM (251 aa)). Residue 10–11 (RD) participates in substrate binding. A Mn(2+)-binding site is contributed by D11. The active-site Proton acceptor is H14. Positions 164 and 191 each coordinate substrate. Positions 191 and 193 each coordinate Mn(2+).

The protein belongs to the 4-hydroxy-2-oxovalerate aldolase family.

The catalysed reaction is (S)-4-hydroxy-2-oxopentanoate = acetaldehyde + pyruvate. This chain is 4-hydroxy-2-oxovalerate aldolase (mhpE), found in Burkholderia pseudomallei (strain K96243).